Here is a 432-residue protein sequence, read N- to C-terminus: Enolase (432 aa).

A (2R)-2-phosphoglycerate-binding site is contributed by glutamine 163. The active-site Proton donor is the glutamate 205. Positions 242, 289, and 316 each coordinate Mg(2+). Lysine 341, arginine 370, serine 371, and lysine 392 together coordinate (2R)-2-phosphoglycerate. Lysine 341 acts as the Proton acceptor in catalysis.

It belongs to the enolase family. It depends on Mg(2+) as a cofactor. Post-translationally, probably phosphorylated.

The protein localises to the cytoplasm. It is found in the secreted. The protein resides in the cell surface. It catalyses the reaction (2R)-2-phosphoglycerate = phosphoenolpyruvate + H2O. The protein operates within carbohydrate degradation; glycolysis; pyruvate from D-glyceraldehyde 3-phosphate: step 4/5. Functionally, catalyzes the reversible conversion of 2-phosphoglycerate (2-PG) into phosphoenolpyruvate (PEP). It is essential for the degradation of carbohydrates via glycolysis. In terms of biological role, 'Moonlights' as a plasminogen receptor. Binds plasminogen and human salivary mucin MG2 when expressed on the bacterial cell surface, potentially allowing the bacterium to acquire surface-associated proteolytic activity that may help the dissemination through oral tissues and entrance into the blood stream. This Streptococcus mutans serotype c (strain ATCC 700610 / UA159) protein is Enolase.